The chain runs to 334 residues: RNA polymerase sigma factor RpoS (334 aa).

Positions 21–50 are disordered; the sequence is PGIMLDESSADEQPSPRATPKATTSFSSKQ. The segment at 61–94 is sigma-70 factor domain-1; the sequence is DATQLYLNEIGFSPLLTPEEEVHFARLAQKGDPA. Residues 99-169 are sigma-70 factor domain-2; sequence MIESNLRLVV…ERAIMNQTRT (71 aa). Positions 123–126 match the Interaction with polymerase core subunit RpoC motif; sequence DLIE. Residues 179-254 form a sigma-70 factor domain-3 region; that stretch reads ELNVYLRAAR…DDRPTDPCEL (76 aa). The sigma-70 factor domain-4 stretch occupies residues 267–320; that stretch reads WLTELTDKQREVVIRRFGLRGHESSTLEEVGQEIGLTRERVRQIQVEALKRLRE. A DNA-binding region (H-T-H motif) is located at residues 293–312; it reads LEEVGQEIGLTRERVRQIQV.

Belongs to the sigma-70 factor family. RpoS subfamily. Interacts with the RNA polymerase core enzyme.

The protein localises to the cytoplasm. Functionally, sigma factors are initiation factors that promote the attachment of RNA polymerase to specific initiation sites and are then released. This sigma factor is the master transcriptional regulator of the stationary phase and the general stress response. In Pseudomonas aeruginosa (strain ATCC 15692 / DSM 22644 / CIP 104116 / JCM 14847 / LMG 12228 / 1C / PRS 101 / PAO1), this protein is RNA polymerase sigma factor RpoS.